The chain runs to 145 residues: Bacilliredoxin GK2368 (145 aa).

It belongs to the bacilliredoxin family.

This Geobacillus kaustophilus (strain HTA426) protein is Bacilliredoxin GK2368.